Consider the following 547-residue polypeptide: Chaperonin GroEL 1 (547 aa).

ATP contacts are provided by residues 30–33, Lys51, 87–91, Gly415, and Asp495; these read TLGP and DGTTT.

The protein belongs to the chaperonin (HSP60) family. As to quaternary structure, forms a cylinder of 14 subunits composed of two heptameric rings stacked back-to-back. Interacts with the co-chaperonin GroES.

It localises to the cytoplasm. The enzyme catalyses ATP + H2O + a folded polypeptide = ADP + phosphate + an unfolded polypeptide.. Together with its co-chaperonin GroES, plays an essential role in assisting protein folding. The GroEL-GroES system forms a nano-cage that allows encapsulation of the non-native substrate proteins and provides a physical environment optimized to promote and accelerate protein folding. The protein is Chaperonin GroEL 1 of Azorhizobium caulinodans (strain ATCC 43989 / DSM 5975 / JCM 20966 / LMG 6465 / NBRC 14845 / NCIMB 13405 / ORS 571).